The primary structure comprises 535 residues: Endogenous retrovirus group V member 2 Env polyprotein (535 aa).

A signal peptide spans 1–21 (MTEKFLFLYLSLLPMPLLSQA). Residues 22–321 (QWNENSLVSF…NTTQPRQKRA (300 aa)) lie on the Extracellular side of the membrane. N-linked (GlcNAc...) asparagine glycosylation occurs at N68. Residues 322–342 (LGLILAGMGAAIGMIAPWGGF) traverse the membrane as a helical segment. The Cytoplasmic segment spans residues 343-456 (TYHDVTLRNL…VKSALPSLNW (114 aa)). Residues 457-477 (FVPLLGPATVILLLFLFGPCF) form a helical membrane-spanning segment. The Extracellular portion of the chain corresponds to 478 to 535 (FNLLIKCVSSRIKQFHMKSPQMERYQLSVIGGPSTYKHISPLDASGQRFRETMEEFSL).

Belongs to the gamma type-C retroviral envelope protein family. In terms of tissue distribution, expressed in placenta.

The protein resides in the membrane. The chain is Endogenous retrovirus group V member 2 Env polyprotein (ERVV-2) from Homo sapiens (Human).